Reading from the N-terminus, the 471-residue chain is Glutamate--tRNA ligase (471 aa).

The short motif at 10-20 is the 'HIGH' region element; sequence PSPTGYLHIGG. 4 residues coordinate Zn(2+): Cys107, Cys109, Cys134, and Glu136. A 'KMSKS' region motif is present at residues 244–248; sequence RLSKR. Lys247 is a binding site for ATP.

It belongs to the class-I aminoacyl-tRNA synthetase family. Glutamate--tRNA ligase type 1 subfamily. In terms of assembly, monomer. The cofactor is Zn(2+).

The protein localises to the cytoplasm. The catalysed reaction is tRNA(Glu) + L-glutamate + ATP = L-glutamyl-tRNA(Glu) + AMP + diphosphate. Functionally, catalyzes the attachment of glutamate to tRNA(Glu) in a two-step reaction: glutamate is first activated by ATP to form Glu-AMP and then transferred to the acceptor end of tRNA(Glu). In Anaeromyxobacter sp. (strain Fw109-5), this protein is Glutamate--tRNA ligase.